The following is a 385-amino-acid chain: Homoserine O-succinyltransferase (385 aa).

The AB hydrolase-1 domain occupies Asn45–Asp355. Ser151 (nucleophile) is an active-site residue. Residue Arg221 coordinates substrate. Active-site residues include Asp316 and His349. Position 350 (Asp350) interacts with substrate.

It belongs to the AB hydrolase superfamily. MetX family. Homodimer.

It is found in the cytoplasm. It carries out the reaction L-homoserine + succinyl-CoA = O-succinyl-L-homoserine + CoA. Its pathway is amino-acid biosynthesis; L-methionine biosynthesis via de novo pathway; O-succinyl-L-homoserine from L-homoserine: step 1/1. Functionally, transfers a succinyl group from succinyl-CoA to L-homoserine, forming succinyl-L-homoserine. The polypeptide is Homoserine O-succinyltransferase (Herminiimonas arsenicoxydans).